The primary structure comprises 265 residues: Transcription factor LBX1 (265 aa).

Residues 1–20 (MTSKDEAKSSSVEERRRHAL) show a composition bias toward basic and acidic residues. Residues 1 to 33 (MTSKDEAKSSSVEERRRHALDLLPPPANSNKPL) are disordered. Positions 125-184 (RRKSRTAFTNHQIYELEKRFLYQKYLSPADRDQIAQQLGLTNAQVITWFQNRRAKLKRDL) form a DNA-binding region, homeobox. The disordered stretch occupies residues 212 to 265 (EEETNSVRDDSRSRSPQLGLSGHMPLSPSSPLTEQHTSKECSEDEEDVEIDVDD). Residues 253–265 (SEDEEDVEIDVDD) are compositionally biased toward acidic residues.

The protein localises to the nucleus. In terms of biological role, transcription factor that controls hypaxial muscle development by down-regulating myod1 and cdkn1b/p27, thereby allowing myoblasts to proliferate before the onset of terminal differentiation. This is Transcription factor LBX1 from Xenopus tropicalis (Western clawed frog).